The sequence spans 270 residues: Chlorophyll a-b binding protein, chloroplastic (270 aa).

Residues 1–41 constitute a chloroplast transit peptide; it reads MASACASSTIAAVAFSSPSSQKNGSIVGATKASFLGGKRLR. Trp68 contributes to the chlorophyll b binding site. Residues Phe88, Glu107, and His110 each contribute to the chlorophyll a site. Chlorophyll b is bound at residue Arg112. The chain crosses the membrane as a helical span at residues 113–133; that stretch reads WAMLGAAGIFIPEFLTKIGVL. Residue Gln144 participates in chlorophyll a binding. Residues 146 to 166 form a helical membrane-spanning segment; the sequence is YFTDTTTLFVIELVLIGWAEG. Residues Val155, Glu165, and Arg168 each coordinate chlorophyll b. Lys221, Glu222, Asn225, Arg227, Gln239, and His254 together coordinate chlorophyll a. The chain crosses the membrane as a helical span at residues 228 to 248; that stretch reads LAMLAVMGAWFQHIYTGTGPI.

The protein belongs to the light-harvesting chlorophyll a/b-binding (LHC) protein family. The LHC complex consists of chlorophyll a-b binding proteins. Requires Binds at least 14 chlorophylls (8 Chl-a and 6 Chl-b) and carotenoids such as lutein and neoxanthin. as cofactor. In terms of processing, photoregulated by reversible phosphorylation of its threonine residues.

It is found in the plastid. The protein localises to the chloroplast thylakoid membrane. The light-harvesting complex (LHC) functions as a light receptor, it captures and delivers excitation energy to photosystems with which it is closely associated. The polypeptide is Chlorophyll a-b binding protein, chloroplastic (Petunia hybrida (Petunia)).